Reading from the N-terminus, the 289-residue chain is Oxaloacetate decarboxylase (289 aa).

Serine 47 provides a ligand contact to substrate. Residue aspartate 85 participates in Mg(2+) binding. 2 residues coordinate substrate: arginine 156 and histidine 232.

It belongs to the isocitrate lyase/PEP mutase superfamily. Oxaloacetate decarboxylase family. As to quaternary structure, homotetramer; dimer of dimers. It depends on Mg(2+) as a cofactor.

It carries out the reaction oxaloacetate + H(+) = pyruvate + CO2. Functionally, catalyzes the decarboxylation of oxaloacetate into pyruvate. Seems to play a role in maintaining cellular concentrations of bicarbonate and pyruvate. This chain is Oxaloacetate decarboxylase, found in Rhodopseudomonas palustris (strain BisA53).